We begin with the raw amino-acid sequence, 104 residues long: Urease subunit beta (104 aa).

Belongs to the urease beta subunit family. In terms of assembly, heterotrimer of UreA (gamma), UreB (beta) and UreC (alpha) subunits. Three heterotrimers associate to form the active enzyme.

It is found in the cytoplasm. It catalyses the reaction urea + 2 H2O + H(+) = hydrogencarbonate + 2 NH4(+). It participates in nitrogen metabolism; urea degradation; CO(2) and NH(3) from urea (urease route): step 1/1. This Mycolicibacterium vanbaalenii (strain DSM 7251 / JCM 13017 / BCRC 16820 / KCTC 9966 / NRRL B-24157 / PYR-1) (Mycobacterium vanbaalenii) protein is Urease subunit beta.